A 493-amino-acid polypeptide reads, in one-letter code: MTELTKLTISEIRAKLADKEFTALELTEAYLSAIQTANEKLNAYITVTADKAREMAKASDMRLMQGGARPLEGVPLGIKDLFATEGVHTQACSHILDAFKPRYESTVTTNLWADGAVMLGKLNMDEFAMGSSNETSYYGPVVNPWREEGGNKDLVPGGSSGGSAAAVAAWLCAGATATDTGGSIRQPAAFTATVGIKPTYGRCSRWGIVAFASSLDQAGPIARDVRDAAILLKSMASVDPKDTTSIDIPVPDYEAAIGQSVKGLKIGIPKEYRVEGMPAEIEALWHKGIEWMRDAGAEIVDISLPHTKYALPAYYIVAPAEASSNLARYDGVRYGLRVPGRDITEMYENSRAAGFGREVKRRIMIGTYVLSAGYYDAYYLRAQRVRTLIKRDFEQAFEAGVDAILTPATPSAAFGIADQEMNADPVKMYLNDIFTVTVNMAGLPGIAVPAGLDSRGLPLGLQLIGRAFDEETLFRTAHIIEQAAGKFEPKRWW.

Active-site charge relay system residues include lysine 79 and serine 159. The Acyl-ester intermediate role is filled by serine 183.

This sequence belongs to the amidase family. GatA subfamily. Heterotrimer of A, B and C subunits.

It carries out the reaction L-glutamyl-tRNA(Gln) + L-glutamine + ATP + H2O = L-glutaminyl-tRNA(Gln) + L-glutamate + ADP + phosphate + H(+). In terms of biological role, allows the formation of correctly charged Gln-tRNA(Gln) through the transamidation of misacylated Glu-tRNA(Gln) in organisms which lack glutaminyl-tRNA synthetase. The reaction takes place in the presence of glutamine and ATP through an activated gamma-phospho-Glu-tRNA(Gln). In Chelativorans sp. (strain BNC1), this protein is Glutamyl-tRNA(Gln) amidotransferase subunit A.